The following is a 515-amino-acid chain: ATP synthase subunit alpha (515 aa).

169–176 (GDRQTGKT) provides a ligand contact to ATP.

It belongs to the ATPase alpha/beta chains family. F-type ATPases have 2 components, CF(1) - the catalytic core - and CF(0) - the membrane proton channel. CF(1) has five subunits: alpha(3), beta(3), gamma(1), delta(1), epsilon(1). CF(0) has three main subunits: a(1), b(2) and c(9-12). The alpha and beta chains form an alternating ring which encloses part of the gamma chain. CF(1) is attached to CF(0) by a central stalk formed by the gamma and epsilon chains, while a peripheral stalk is formed by the delta and b chains.

The protein localises to the cell inner membrane. It carries out the reaction ATP + H2O + 4 H(+)(in) = ADP + phosphate + 5 H(+)(out). Functionally, produces ATP from ADP in the presence of a proton gradient across the membrane. The alpha chain is a regulatory subunit. In Neisseria meningitidis serogroup A / serotype 4A (strain DSM 15465 / Z2491), this protein is ATP synthase subunit alpha.